The primary structure comprises 86 residues: MPSDLEKPTIIYPCVWDYRVIMTTNDTSVLKELLETYQRPFKLELKNTSKNAKFYSFNVSMEVSNEAERNEIFQKISQLEVVAHAL.

To C.jejuni CJ0253.

This is an uncharacterized protein from Helicobacter pylori (strain J99 / ATCC 700824) (Campylobacter pylori J99).